Reading from the N-terminus, the 140-residue chain is Fluoride-specific ion channel FluC 2 (140 aa).

Transmembrane regions (helical) follow at residues 7 to 27 (VPPL…LGAL), 45 to 65 (WATF…MVLV), 77 to 97 (PFAG…GLEI), and 106 to 126 (VLEA…GVVL). Gly85 and Thr88 together coordinate Na(+).

Belongs to the fluoride channel Fluc/FEX (TC 1.A.43) family.

It is found in the cell membrane. The catalysed reaction is fluoride(in) = fluoride(out). Na(+) is not transported, but it plays an essential structural role and its presence is essential for fluoride channel function. Its function is as follows. Fluoride-specific ion channel. Important for reducing fluoride concentration in the cell, thus reducing its toxicity. This Nocardia farcinica (strain IFM 10152) protein is Fluoride-specific ion channel FluC 2.